Reading from the N-terminus, the 193-residue chain is Holliday junction branch migration complex subunit RuvA (193 aa).

The tract at residues 1-64 (MIGRIAGILL…EDAHLLYGFL (64 aa)) is domain I. Residues 65–139 (TPQERTTFRE…GKLGADLGAL (75 aa)) are domain II. The segment at 139–143 (LAGAA) is flexible linker. The segment at 144 to 193 (SPSDHAADILNALVALGYSEKEGLAAIKNVPAGTGVSDGIKLALKALSKA) is domain III.

Belongs to the RuvA family. As to quaternary structure, homotetramer. Forms an RuvA(8)-RuvB(12)-Holliday junction (HJ) complex. HJ DNA is sandwiched between 2 RuvA tetramers; dsDNA enters through RuvA and exits via RuvB. An RuvB hexamer assembles on each DNA strand where it exits the tetramer. Each RuvB hexamer is contacted by two RuvA subunits (via domain III) on 2 adjacent RuvB subunits; this complex drives branch migration. In the full resolvosome a probable DNA-RuvA(4)-RuvB(12)-RuvC(2) complex forms which resolves the HJ.

The protein resides in the cytoplasm. Functionally, the RuvA-RuvB-RuvC complex processes Holliday junction (HJ) DNA during genetic recombination and DNA repair, while the RuvA-RuvB complex plays an important role in the rescue of blocked DNA replication forks via replication fork reversal (RFR). RuvA specifically binds to HJ cruciform DNA, conferring on it an open structure. The RuvB hexamer acts as an ATP-dependent pump, pulling dsDNA into and through the RuvAB complex. HJ branch migration allows RuvC to scan DNA until it finds its consensus sequence, where it cleaves and resolves the cruciform DNA. In Burkholderia vietnamiensis (strain G4 / LMG 22486) (Burkholderia cepacia (strain R1808)), this protein is Holliday junction branch migration complex subunit RuvA.